We begin with the raw amino-acid sequence, 105 residues long: Large ribosomal subunit protein uL24 (105 aa).

It belongs to the universal ribosomal protein uL24 family. In terms of assembly, part of the 50S ribosomal subunit.

Its function is as follows. One of two assembly initiator proteins, it binds directly to the 5'-end of the 23S rRNA, where it nucleates assembly of the 50S subunit. Functionally, one of the proteins that surrounds the polypeptide exit tunnel on the outside of the subunit. The chain is Large ribosomal subunit protein uL24 from Clostridium botulinum (strain 657 / Type Ba4).